The chain runs to 312 residues: Pseudouridine-5'-phosphate glycosidase (312 aa).

Glu-31 (proton donor) is an active-site residue. Lys-93 and Val-113 together coordinate substrate. Asp-145 contributes to the Mn(2+) binding site. 147–149 (SAD) is a substrate binding site. The Nucleophile role is filled by Lys-166.

The protein belongs to the pseudouridine-5'-phosphate glycosidase family. In terms of assembly, homotrimer. The cofactor is Mn(2+). Fe(2+) serves as cofactor. Requires Co(2+) as cofactor.

It carries out the reaction D-ribose 5-phosphate + uracil = psi-UMP + H2O. With respect to regulation, inhibited by Zn(2+) and Ni(2+). In terms of biological role, catalyzes the reversible cleavage of pseudouridine 5'-phosphate (PsiMP) to ribose 5-phosphate and uracil. Functions biologically in the cleavage direction, as part of a pseudouridine degradation pathway. This chain is Pseudouridine-5'-phosphate glycosidase, found in Escherichia coli (strain K12).